The primary structure comprises 94 residues: RING finger protein Z (94 aa).

The span at 1-19 (MGNCNGASKSNQPDSSRVT) shows a compositional bias: polar residues. The interval 1-20 (MGNCNGASKSNQPDSSRVTQ) is disordered. A lipid anchor (N-myristoyl glycine; by host) is attached at Gly-2. The RING-type; atypical zinc-finger motif lies at 39–75 (CKCCWFADTNLITCNDHYLCLRCHQVMLRNSDLCNIC). The PTAP/PSAP motif motif lies at 89–92 (PTAP).

This sequence belongs to the arenaviridae Z protein family. As to quaternary structure, interacts with protein NP; this interaction probably directs the encapsidated genome to budding sites. Interacts (via RING domain) with polymerase L; this interaction inhibits viral transcription and replication, Z partially blocks the product exit tunnel for the releasing nascent RNA product. Interacts with the glycoprotein complex; this interaction plays a role in virion budding. Interacts with host eIF4E; this interaction results in eIF4E reduced affinity for its substrate, the 5'-m7 G cap structure. Interacts (via late-budding domain) with host TSG101; this interaction is essential for budding and release of viral particles. Interacts with host RPLP0; this interaction may serve to load ribosome-like particles inside the virion. Interacts with host PML; this interaction induces PML bodies redistribution in the cytoplasm upon viral infection. Myristoylation is required for the role of RING finger protein Z in assembly and budding.

The protein resides in the virion. The protein localises to the host cytoplasm. It is found in the host perinuclear region. It localises to the host cell membrane. In terms of biological role, plays a crucial role in virion assembly and budding. Expressed late in the virus life cycle, it acts as an inhibitor of viral transcription and RNA synthesis by interacting with the viral polymerase L. Presumably recruits the NP encapsidated genome to cellular membranes at budding sites via direct interaction with NP. Plays critical roles in the final steps of viral release by interacting with host TSG101, a member of the vacuolar protein-sorting pathway and using other cellular host proteins involved in vesicle formation pathway. The budding of the virus progeny occurs after association of protein Z with the viral glycoprotein complex SSP-GP1-GP2 at the cell periphery, step that requires myristoylation of protein Z. Also selectively represses protein production by associating with host eIF4E. In cell-based minigenome assay, has an inhibitory effect on the ribonucleoprotein machinery (vRNP), which is responsible for the replication and transcription of the viral genome. The polypeptide is RING finger protein Z (Akodon azarae (Azara's grass mouse)).